A 2313-amino-acid chain; its full sequence is Histone-lysine N-methyltransferase Set2 (2313 aa).

Disordered stretches follow at residues 1–115, 179–442, 550–858, 883–1106, 1118–1150, and 1163–1251; these read MEES…ASTS, AVGG…EETF, EPPL…LKAK, RLDE…KKAL, ETES…PFGD, and KRDK…SQGR. A DNA-binding region (a.T hook 1) is located at residues 17–29; sequence GRGRGRPPKVALS. A compositionally biased stretch (basic and acidic residues) spans 73–82; the sequence is IKFDVRDLLN. Low complexity predominate over residues 101 to 115; the sequence is STGHSQSGTTAASTS. The a.T hook 2 DNA-binding region spans 197–209; that stretch reads PRKRGRPRKSQLA. A compositionally biased stretch (low complexity) spans 221-241; the sequence is SCSDSDTNSTSTTTSNMSSDS. A compositionally biased stretch (basic residues) spans 252 to 265; the sequence is PKSKLRVSLKRLKL. Residues 266–288 are compositionally biased toward low complexity; sequence GGRLESSDSGNSPSSSSPEVEPP. Positions 330–345 are enriched in basic and acidic residues; the sequence is ESPKGEEEQEEGRPVE. Acidic residues-rich tracts occupy residues 347-356, 365-375, and 388-398; these read EPQDLIDIDM, PDPEEDLDEIM, and ADDEAEEEEDA. T404 carries the phosphothreonine modification. Residues 412–433 are compositionally biased toward low complexity; it reads ADSCSSAPRRSRRSAPLSGSSR. Basic and acidic residues predominate over residues 552 to 563; sequence PLKDESDPKQTE. The segment covering 659-671 has biased composition (acidic residues); the sequence is EDYESNQEQVAED. Polar residues predominate over residues 676–685; it reads CNNQKGQKQT. Composition is skewed to basic and acidic residues over residues 689-708, 719-732, 740-749, and 758-782; these read EMKE…EKAM, VDKK…EKKV, VPEKKMDSKK, and KQKE…KSSA. 2 positions are modified to phosphoserine: S786 and S788. 3 stretches are compositionally biased toward polar residues: residues 800–833, 918–928, and 938–955; these read AQWS…SNQP, KSLSGKTSLRR, and LERN…NTSA. Positions 959–969 are enriched in basic residues; it reads KPSKVKKKINP. The span at 997-1010 shows a compositional bias: low complexity; sequence SSPVSTSSDSSSKR. Positions 1016–1039 are enriched in basic and acidic residues; the sequence is TTSDLDGGSKLDQRRYTICEDRQP. 2 stretches are compositionally biased toward low complexity: residues 1085–1097 and 1118–1127; these read SRQN…SSAS and ETESSESTSS. Residues 1163–1183 are compositionally biased toward basic and acidic residues; it reads KRDKVDEDQRKEGQDEVKREA. Residues 1199-1213 are compositionally biased toward low complexity; sequence TPATTPTPSPTQSNP. One can recognise an AWS domain in the interval 1307–1360; sequence NAEMQCDCFLTGDEEAQGHLSCGAGCINRMLMIECGPLCSNGARCTNKRFQQHQ. 7 residues coordinate Zn(2+): C1312, C1314, C1328, C1332, C1341, C1345, and C1351. An SET domain is found at 1362 to 1479; that stretch reads WPCRVFRTEK…PGEEITFDYQ (118 aa). S-adenosyl-L-methionine-binding positions include 1415–1417 and 1440–1441; these read HYY and NH. C1443 provides a ligand contact to Zn(2+). The 17-residue stretch at 1486–1502 folds into the Post-SET domain; it reads DAQRCYCEAANCRGWIG. Q1488 serves as a coordination point for S-adenosyl-L-methionine. Residue C1490 participates in Zn(2+) binding. S-adenosyl-L-methionine is bound at residue Y1491. Zn(2+) contacts are provided by C1492 and C1497. 2 disordered regions span residues 1501 to 1598 and 1763 to 1860; these read IGGE…KPKV and MKEH…RRTL. Residues 1505 to 1534 are compositionally biased toward acidic residues; sequence PDSDEGEQLDEESDSDAEMDEEELEAEPEE. Over residues 1539-1551 the composition is skewed to basic residues; it reads KSAKAKAKSKLKA. 3 stretches are compositionally biased toward basic and acidic residues: residues 1564–1574, 1763–1774, and 1784–1806; these read QTKPKDREYKA, MKEHEREADRQQ, and EDQR…RDTT. Polar residues predominate over residues 1817 to 1832; it reads SGNNTICTITTQQKGS. The segment covering 1840 to 1860 has biased composition (basic and acidic residues); it reads TRNDNRRRSDIGPPSEQRRTL. Residues 1963 to 1996 enclose the WW domain; it reads DPLPPAWNWQVTSDGDIYYYNLRERISQWEPPSP. 2 positions are modified to phosphoserine: S2130 and S2131. Positions 2177–2218 are disordered; it reads LGTVGKRKLPMPPSVTVKKHRQEQRSKKVKSSQSPLTATSAR. The span at 2193–2206 shows a compositional bias: basic residues; that stretch reads VKKHRQEQRSKKVK. A compositionally biased stretch (polar residues) spans 2207–2216; it reads SSQSPLTATS.

This sequence belongs to the class V-like SAM-binding methyltransferase superfamily. Histone-lysine methyltransferase family. SET2 subfamily. As to quaternary structure, interacts with (phosphorylated) Polr2A.

The protein resides in the nucleus. Its subcellular location is the chromosome. It catalyses the reaction L-lysyl(36)-[histone H3] + 3 S-adenosyl-L-methionine = N(6),N(6),N(6)-trimethyl-L-lysyl(36)-[histone H3] + 3 S-adenosyl-L-homocysteine + 3 H(+). Its function is as follows. Histone methyltransferase that specifically trimethylates 'Lys-36' of histone H3 (H3K36me3). Represents the main enzyme generating H3K36me3, a specific tag for epigenetic transcriptional activation. Involved in dosage compensation in males (X chromosome dosage compensation) by mediating formation of H3K36me3, a mark recognized by msl-3 component of the MSL complex. In addition to its role in dosage compensation in males, promotes germline stem cell differentiation in females: catalyzes formation of H3K36me3, promoting recruitment of msl-3 and subsequent recruitment of the ATAC complex, leading to transcription of genes, such as RpS19b. The protein is Histone-lysine N-methyltransferase Set2 of Drosophila melanogaster (Fruit fly).